Reading from the N-terminus, the 283-residue chain is Energy-coupling factor transporter ATP-binding protein EcfA1 (283 aa).

An ABC transporter domain is found at 7-244 (VEFRHVSFTY…PELLQEIGLD (238 aa)). 41–48 (GHNGSGKS) is an ATP binding site.

The protein belongs to the ABC transporter superfamily. Energy-coupling factor EcfA family. As to quaternary structure, forms a stable energy-coupling factor (ECF) transporter complex composed of 2 membrane-embedded substrate-binding proteins (S component), 2 ATP-binding proteins (A component) and 2 transmembrane proteins (T component).

The protein localises to the cell membrane. Functionally, ATP-binding (A) component of a common energy-coupling factor (ECF) ABC-transporter complex. Unlike classic ABC transporters this ECF transporter provides the energy necessary to transport a number of different substrates. The protein is Energy-coupling factor transporter ATP-binding protein EcfA1 of Lactobacillus acidophilus (strain ATCC 700396 / NCK56 / N2 / NCFM).